The chain runs to 1021 residues: Sodium/potassium-transporting ATPase subunit alpha-1 (1021 aa).

The propeptide occupies 1–5 (MGKGV). Positions 1 to 11 (MGKGVGRDKYE) are enriched in basic and acidic residues. The segment at 1–36 (MGKGVGRDKYEPAAVSEHGDKKKAKKERDMDELKKE) is disordered. Over 6–85 (GRDKYEPAAV…NALTPPPTTP (80 aa)) the chain is Cytoplasmic. Lysine 9 is modified (N6-acetyllysine). Tyrosine 10 carries the phosphotyrosine modification. Phosphoserine; by PKC is present on serine 16. Lysine 21 is subject to N6-acetyllysine. A compositionally biased stretch (basic and acidic residues) spans 26-36 (KERDMDELKKE). Serine 38 and serine 45 each carry phosphoserine. The interval 80–82 (PPP) is phosphoinositide-3 kinase binding. Residues 86–106 (EWVKFCRQLFGGFSMLLWIGA) traverse the membrane as a helical segment. Residues 107–129 (VLCFLAYGIQAATEEEPQNDNLY) are Extracellular-facing. A helical membrane pass occupies residues 130–150 (LGVVLSAVVIITGCFSYYQEA). Topologically, residues 151–286 (KSSKIMESFK…GGQTPIAAEI (136 aa)) are cytoplasmic. Residue serine 226 is modified to Phosphoserine. Tyrosine 258 is subject to Phosphotyrosine. A helical transmembrane segment spans residues 287-306 (EHFIHIITGVAVFLGVSFFI). Residues 307 to 318 (LSLILEYTWLEA) are Extracellular-facing. A helical membrane pass occupies residues 319–336 (VIFLIGIIVANVPEGLLA). The Cytoplasmic segment spans residues 337–770 (TVTVCLTLTA…EEGRLIFDNL (434 aa)). The active-site 4-aspartylphosphate intermediate is the aspartate 374. Phosphoserine occurs at positions 450 and 482. ATP is bound at residue lysine 485. Tyrosine 540 is subject to Phosphotyrosine. Positions 594-715 (RAAVPDAVGK…QGAIVAVTGD (122 aa)) are mediates interaction with SCN7A. Serine 666 is subject to Phosphoserine. Positions 715 and 719 each coordinate Mg(2+). Residues 771-790 (KKSIAYTLTSNIPEITPFLI) form a helical membrane-spanning segment. Residues 791 to 800 (FIIANIPLPL) lie on the Extracellular side of the membrane. Residues 801–821 (GTVTILCIDLGTDMVPAISLA) traverse the membrane as a helical segment. The Cytoplasmic portion of the chain corresponds to 822–841 (YEQAESDIMKRQPRNPQTDK). The helical transmembrane segment at 842–864 (LVNERLISMAYGQIGMIQALGGF) threads the bilayer. At 865 to 916 (FTYFVIMAENGFLPNHLLGIRVTWDDRWINDVEDSYGQQWTYEQRKIVEFTC) the chain is on the extracellular side. A helical membrane pass occupies residues 917-936 (HTAFFVSIVVVQWADLVICK). Residues 937-949 (TRRNSVFQQGMKN) lie on the Cytoplasmic side of the membrane. Phosphoserine; by PKA is present on serine 941. Residues 950–968 (KILIFGLFEETALAAFLSY) traverse the membrane as a helical segment. Over 969–983 (CPGMGVALRMYPLKP) the chain is Extracellular. A helical membrane pass occupies residues 984–1004 (TWWFCAFPYSLLIFVYDEVRK). Residues 1005-1021 (LIIRRRPGGWVEKETYY) lie on the Cytoplasmic side of the membrane.

It belongs to the cation transport ATPase (P-type) (TC 3.A.3) family. Type IIC subfamily. As to quaternary structure, the sodium/potassium-transporting ATPase is composed of a catalytic alpha subunit, an auxiliary non-catalytic beta subunit and an additional regulatory subunit. Interacts with regulatory subunit FXYD1. Interacts with regulatory subunit FXYD3. Interacts with SIK1. Interacts with SLC35G1 and STIM1. Interacts with CLN3; this interaction regulates the sodium/potassium-transporting ATPase complex localization at the plasma membrane. Interacts with SCN7A; activates ATP1A1 P-type sodium:potassium-exchanging transporter activity which indirectly signals to nearby neurons to regulate sodium homeostasis. Phosphorylation on Tyr-10 modulates pumping activity. Phosphorylation of Ser-941 by PKA modulates the response of ATP1A1 to PKC. Dephosphorylation by protein phosphatase 2A (PP2A) following increases in intracellular sodium, leading to increase catalytic activity.

The protein localises to the cell membrane. Its subcellular location is the basolateral cell membrane. It is found in the sarcolemma. The protein resides in the cell projection. It localises to the axon. The protein localises to the melanosome. The enzyme catalyses K(+)(out) + Na(+)(in) + ATP + H2O = K(+)(in) + Na(+)(out) + ADP + phosphate + H(+). Functionally, this is the catalytic component of the active enzyme, which catalyzes the hydrolysis of ATP coupled with the exchange of sodium and potassium ions across the plasma membrane. This action creates the electrochemical gradient of sodium and potassium ions, providing the energy for active transport of various nutrients. Could also be part of an osmosensory signaling pathway that senses body-fluid sodium levels and controls salt intake behavior as well as voluntary water intake to regulate sodium homeostasis. This Bos taurus (Bovine) protein is Sodium/potassium-transporting ATPase subunit alpha-1 (ATP1A1).